Reading from the N-terminus, the 510-residue chain is Probable allantoinase 2 (510 aa).

Zn(2+)-binding residues include His97, His99, Lys185, His228, His287, and Asp360. Lys185 is subject to N6-carboxylysine.

This sequence belongs to the metallo-dependent hydrolases superfamily. Allantoinase family. As to quaternary structure, homotetramer. Zn(2+) is required as a cofactor. Post-translationally, carboxylation allows a single lysine to coordinate two zinc ions.

It catalyses the reaction (S)-allantoin + H2O = allantoate + H(+). Its pathway is nitrogen metabolism; (S)-allantoin degradation; allantoate from (S)-allantoin: step 1/1. This is Probable allantoinase 2 (allB2) from Dictyostelium discoideum (Social amoeba).